A 347-amino-acid polypeptide reads, in one-letter code: 5-deoxyribose 1-phosphate isomerase (347 aa).

Residues Arg48–Ala50, Arg91, and Gln198 contribute to the substrate site. The active-site Proton donor is Asp239. Asn249–Lys250 contacts substrate.

It belongs to the EIF-2B alpha/beta/delta subunits family. DrdI subfamily.

It carries out the reaction 5-deoxy-alpha-D-ribose 1-phosphate = 5-deoxy-D-ribulose 1-phosphate. The protein operates within carbohydrate degradation. Catalyzes the isomerization of 5-deoxy-alpha-D-ribose 1-phosphate to 5-deoxy-D-ribulose 1-phosphate, as part of a 5-deoxyribose salvage pathway that recycles this toxic radical SAM enzyme by-product to mainstream metabolites. This is 5-deoxyribose 1-phosphate isomerase from Bacillus thuringiensis (strain Al Hakam).